The following is a 302-amino-acid chain: Homoserine O-acetyltransferase (302 aa).

Cys-142 functions as the Acyl-thioester intermediate in the catalytic mechanism. Residues Lys-163 and Ser-192 each coordinate substrate. His-235 functions as the Proton acceptor in the catalytic mechanism. Residue Glu-237 is part of the active site. Arg-249 is a substrate binding site.

Belongs to the MetA family.

It is found in the cytoplasm. It carries out the reaction L-homoserine + acetyl-CoA = O-acetyl-L-homoserine + CoA. Its pathway is amino-acid biosynthesis; L-methionine biosynthesis via de novo pathway; O-acetyl-L-homoserine from L-homoserine: step 1/1. In terms of biological role, transfers an acetyl group from acetyl-CoA to L-homoserine, forming acetyl-L-homoserine. The polypeptide is Homoserine O-acetyltransferase (Geobacillus kaustophilus).